Reading from the N-terminus, the 138-residue chain is Large ribosomal subunit protein uL16 (138 aa).

A compositionally biased stretch (basic residues) spans 1 to 16; it reads MLIPRKVAHRKQHHPG. A disordered region spans residues 1–24; sequence MLIPRKVAHRKQHHPGRTGAAKGG.

The protein belongs to the universal ribosomal protein uL16 family. In terms of assembly, part of the 50S ribosomal subunit.

In terms of biological role, binds 23S rRNA and is also seen to make contacts with the A and possibly P site tRNAs. The sequence is that of Large ribosomal subunit protein uL16 from Frankia alni (strain DSM 45986 / CECT 9034 / ACN14a).